The sequence spans 297 residues: Glycerol-3-phosphate dehydrogenase [NAD(P)+] (297 aa).

Trp11, Arg33, and Lys79 together coordinate NADPH. The sn-glycerol 3-phosphate site is built by Lys79, Gly107, and Ser109. Position 111 (Ala111) interacts with NADPH. Residues Lys161, Asp214, Ser224, Arg225, and Asn226 each contribute to the sn-glycerol 3-phosphate site. The active-site Proton acceptor is the Lys161. Arg225 serves as a coordination point for NADPH. Residues Val249 and Glu251 each coordinate NADPH.

The protein belongs to the NAD-dependent glycerol-3-phosphate dehydrogenase family.

Its subcellular location is the cytoplasm. The enzyme catalyses sn-glycerol 3-phosphate + NAD(+) = dihydroxyacetone phosphate + NADH + H(+). It carries out the reaction sn-glycerol 3-phosphate + NADP(+) = dihydroxyacetone phosphate + NADPH + H(+). The protein operates within membrane lipid metabolism; glycerophospholipid metabolism. Catalyzes the reduction of the glycolytic intermediate dihydroxyacetone phosphate (DHAP) to sn-glycerol 3-phosphate (G3P), the key precursor for phospholipid synthesis. The protein is Glycerol-3-phosphate dehydrogenase [NAD(P)+] of Campylobacter jejuni subsp. jejuni serotype O:2 (strain ATCC 700819 / NCTC 11168).